The sequence spans 276 residues: Stathmin domain-containing protein 1 (276 aa).

3 disordered regions span residues Met1–Ser40, Val61–Gln106, and Gly226–Ile250. Gly2 is lipidated: N-myristoyl glycine. 2 stretches are compositionally biased toward polar residues: residues Gly68–Ser78 and Asp87–Leu100. Residues Gln118–Lys244 enclose the SLD domain.

This Homo sapiens (Human) protein is Stathmin domain-containing protein 1 (STMND1).